Reading from the N-terminus, the 226-residue chain is EEF1A lysine methyltransferase 1 (226 aa).

At S2 the chain carries N-acetylserine. At S2 the chain carries Phosphoserine.

The protein belongs to the class I-like SAM-binding methyltransferase superfamily. EFM5 family.

Its subcellular location is the cytoplasm. It carries out the reaction L-lysyl-[protein] + 3 S-adenosyl-L-methionine = N(6),N(6),N(6)-trimethyl-L-lysyl-[protein] + 3 S-adenosyl-L-homocysteine + 3 H(+). Functionally, protein-lysine methyltransferase that selectively catalyzes the trimethylation of EEF1A at 'Lys-79'. The chain is EEF1A lysine methyltransferase 1 from Bos taurus (Bovine).